The chain runs to 117 residues: G antigen 6 (117 aa).

Residues 1–117 (MSWRGRSTYY…PEEGEKQSQC (117 aa)) are disordered. Acidic residues-rich tracts occupy residues 32-45 (FSDE…EEGE) and 87-96 (ECEDGPDGQE). Basic and acidic residues predominate over residues 103–117 (EEVKTPEEGEKQSQC).

This sequence belongs to the GAGE family. As to expression, expressed in a variety of tumor tissues but not in normal tissues, except testis.

The polypeptide is G antigen 6 (GAGE6) (Homo sapiens (Human)).